A 1486-amino-acid polypeptide reads, in one-letter code: Chromosome partition protein MukB (1486 aa).

34-41 provides a ligand contact to ATP; sequence GGNGAGKS. 3 coiled-coil regions span residues 326–418, 444–480, and 509–603; these read LEAD…QYNQ, LETF…QAYQ, and RHLA…RAPV. Residues 666–783 are flexible hinge; sequence PGGSEDQRLN…EVPLFGRAAR (118 aa). Coiled coils occupy residues 835 to 923, 977 to 1115, and 1209 to 1265; these read EAEI…AKLE, EMLS…TAKA, and VEAI…LQSV.

This sequence belongs to the SMC family. MukB subfamily. As to quaternary structure, homodimerization via its hinge domain. Binds to DNA via its C-terminal region. Interacts, and probably forms a ternary complex, with MukE and MukF via its C-terminal region. The complex formation is stimulated by calcium or magnesium. Interacts with tubulin-related protein FtsZ.

It is found in the cytoplasm. Its subcellular location is the nucleoid. Plays a central role in chromosome condensation, segregation and cell cycle progression. Functions as a homodimer, which is essential for chromosome partition. Involved in negative DNA supercoiling in vivo, and by this means organize and compact chromosomes. May achieve or facilitate chromosome segregation by condensation DNA from both sides of a centrally located replisome during cell division. The polypeptide is Chromosome partition protein MukB (Escherichia coli O7:K1 (strain IAI39 / ExPEC)).